Reading from the N-terminus, the 1587-residue chain is Pentafunctional AROM polypeptide (1587 aa).

Residues 1–384 (MIEPTKISIL…YEPRASVVAN (384 aa)) are 3-dehydroquinate synthase. NAD(+) is bound by residues 44–46 (DTN), 81–84 (EVSK), 114–116 (GGV), and D119. Position 130 (R130) interacts with 7-phospho-2-dehydro-3-deoxy-D-arabino-heptonate. Residue 139 to 140 (TT) coordinates NAD(+). Residues D146 and K152 each coordinate 7-phospho-2-dehydro-3-deoxy-D-arabino-heptonate. NAD(+) is bound at residue K161. 7-phospho-2-dehydro-3-deoxy-D-arabino-heptonate is bound at residue N162. NAD(+)-binding positions include 179–182 (FLET) and N190. A Zn(2+)-binding site is contributed by E194. Residues 194–197 (EVIK) and K250 contribute to the 7-phospho-2-dehydro-3-deoxy-D-arabino-heptonate site. E260 (proton acceptor; for 3-dehydroquinate synthase activity) is an active-site residue. 7-phospho-2-dehydro-3-deoxy-D-arabino-heptonate-binding positions include 264 to 268 (RNLLN) and H271. H271 lines the Zn(2+) pocket. H275 acts as the Proton acceptor; for 3-dehydroquinate synthase activity in catalysis. 2 residues coordinate 7-phospho-2-dehydro-3-deoxy-D-arabino-heptonate: H287 and K356. Zn(2+) is bound at residue H287. The segment at 397–842 (VFPGVSPKST…WDTLRLKFAV (446 aa)) is EPSP synthase. The active-site For EPSP synthase activity is the C824. The tract at residues 864 to 1055 (SASVFIIGMR…KKKQHSFFVS (192 aa)) is shikimate kinase. Position 871-878 (871-878 (GMRGAGKT)) interacts with ATP. The tract at residues 1056–1276 (LTLPDLRPAG…AAPGQLSATE (221 aa)) is 3-dehydroquinase. The active-site Proton acceptor; for 3-dehydroquinate dehydratase activity is the H1179. Residue K1207 is the Schiff-base intermediate with substrate; for 3-dehydroquinate dehydratase activity of the active site. The tract at residues 1289–1587 (KKRFALFGTP…RDAVLGTKAD (299 aa)) is shikimate dehydrogenase.

In the N-terminal section; belongs to the sugar phosphate cyclases superfamily. Dehydroquinate synthase family. It in the 2nd section; belongs to the EPSP synthase family. This sequence in the 3rd section; belongs to the shikimate kinase family. The protein in the 4th section; belongs to the type-I 3-dehydroquinase family. In the C-terminal section; belongs to the shikimate dehydrogenase family. As to quaternary structure, homodimer. Requires Zn(2+) as cofactor.

It is found in the cytoplasm. It catalyses the reaction 7-phospho-2-dehydro-3-deoxy-D-arabino-heptonate = 3-dehydroquinate + phosphate. The catalysed reaction is 3-dehydroquinate = 3-dehydroshikimate + H2O. The enzyme catalyses shikimate + NADP(+) = 3-dehydroshikimate + NADPH + H(+). It carries out the reaction shikimate + ATP = 3-phosphoshikimate + ADP + H(+). It catalyses the reaction 3-phosphoshikimate + phosphoenolpyruvate = 5-O-(1-carboxyvinyl)-3-phosphoshikimate + phosphate. Its pathway is metabolic intermediate biosynthesis; chorismate biosynthesis; chorismate from D-erythrose 4-phosphate and phosphoenolpyruvate: step 2/7. The protein operates within metabolic intermediate biosynthesis; chorismate biosynthesis; chorismate from D-erythrose 4-phosphate and phosphoenolpyruvate: step 3/7. It participates in metabolic intermediate biosynthesis; chorismate biosynthesis; chorismate from D-erythrose 4-phosphate and phosphoenolpyruvate: step 4/7. It functions in the pathway metabolic intermediate biosynthesis; chorismate biosynthesis; chorismate from D-erythrose 4-phosphate and phosphoenolpyruvate: step 5/7. Its pathway is metabolic intermediate biosynthesis; chorismate biosynthesis; chorismate from D-erythrose 4-phosphate and phosphoenolpyruvate: step 6/7. Functionally, the AROM polypeptide catalyzes 5 consecutive enzymatic reactions in prechorismate polyaromatic amino acid biosynthesis. This chain is Pentafunctional AROM polypeptide, found in Aspergillus clavatus (strain ATCC 1007 / CBS 513.65 / DSM 816 / NCTC 3887 / NRRL 1 / QM 1276 / 107).